The chain runs to 316 residues: DDRGK domain-containing protein 1 (316 aa).

The Lumenal segment spans residues 1 to 3 (MVE). The helical transmembrane segment at 4–24 (LDYLFLGSVGFLTIALMLIIL) threads the bilayer. The Cytoplasmic segment spans residues 25-316 (RIIKLYFDEK…VEHVSELTAA (292 aa)). Residues 147-187 (LEQEKEKRLQKEREKQMEQEEEERKRKCREREEREKREEEE) are disordered.

The protein belongs to the DDRGK1 family.

The protein localises to the endoplasmic reticulum membrane. In terms of biological role, substrate adapter for ufmylation, the covalent attachment of the ubiquitin-like modifier UFM1 to substrate proteins. This is DDRGK domain-containing protein 1 from Brugia malayi (Filarial nematode worm).